The sequence spans 126 residues: E3 ubiquitin-protein ligase PPP1R11 (126 aa).

The disordered stretch occupies residues 1-25; sequence MAEAGAGLSETVTETTVTVTTEPEN. Position 2 is an N-acetylalanine (A2). Over residues 10–22 the composition is skewed to low complexity; sequence ETVTETTVTVTTE. Positions 52–62 are atypical RING finger domain 1; the sequence is HMGRRSSKCCC. Residues 70-126 form a disordered region; that stretch reads FGESSTESDEEEEEGCGHTHCVRGHRKGRRRATLGPTPTTPPQPPDPSQPPPGPMQH. Phosphoserine occurs at positions 73 and 74. Phosphothreonine is present on T75. S77 carries the phosphoserine modification. Residues 85 to 94 form an atypical RING finger domain 2 region; that stretch reads CGHTHCVRGH. The span at 89–101 shows a compositional bias: basic residues; that stretch reads HCVRGHRKGRRRA. A compositionally biased stretch (pro residues) spans 107-126; that stretch reads PTTPPQPPDPSQPPPGPMQH. A Phosphothreonine modification is found at T109.

Interacts with TLR2 and UBE2D2. In terms of processing, auto-ubiquitinated. As to expression, widely expressed.

The enzyme catalyses S-ubiquitinyl-[E2 ubiquitin-conjugating enzyme]-L-cysteine + [acceptor protein]-L-lysine = [E2 ubiquitin-conjugating enzyme]-L-cysteine + N(6)-ubiquitinyl-[acceptor protein]-L-lysine.. It functions in the pathway protein modification; protein ubiquitination. Functionally, atypical E3 ubiquitin-protein ligase which ubiquitinates TLR2 at 'Lys-754' leading to its degradation by the proteasome. Plays a role in regulating inflammatory cytokine release and gram-positive bacterial clearance by functioning, in part, through the ubiquitination and degradation of TLR2. Inhibitor of protein phosphatase 1. The polypeptide is E3 ubiquitin-protein ligase PPP1R11 (PPP1R11) (Homo sapiens (Human)).